Consider the following 470-residue polypeptide: Argininosuccinate lyase (470 aa).

Belongs to the lyase 1 family. Argininosuccinate lyase subfamily.

It localises to the cytoplasm. The catalysed reaction is 2-(N(omega)-L-arginino)succinate = fumarate + L-arginine. It participates in amino-acid biosynthesis; L-arginine biosynthesis; L-arginine from L-ornithine and carbamoyl phosphate: step 3/3. This Mycobacterium tuberculosis (strain ATCC 25618 / H37Rv) protein is Argininosuccinate lyase.